Reading from the N-terminus, the 900-residue chain is DNA mismatch repair protein MutS (900 aa).

637–644 provides a ligand contact to ATP; it reads GPNMAGKS.

This sequence belongs to the DNA mismatch repair MutS family.

In terms of biological role, this protein is involved in the repair of mismatches in DNA. It is possible that it carries out the mismatch recognition step. This protein has a weak ATPase activity. This Methanosarcina mazei (strain ATCC BAA-159 / DSM 3647 / Goe1 / Go1 / JCM 11833 / OCM 88) (Methanosarcina frisia) protein is DNA mismatch repair protein MutS.